A 691-amino-acid chain; its full sequence is MPRQFPLEKTRNIGIMAHIDAGKTTTTERILFYTGKVYKMGEVHEGTATMDWMEQEQERGITITSAATTCEWRGHRINIIDTPGHVDFTVEVERSLRVLDGAIAVFCAKGGVEPQSETVWRQADKYRVPRIAYVNKMDIMGANFFNVIEMMKERLGANPVAIQVPIGKEDTFKGVVDLLTMKAIIYVDDLGKVSQETEIPDEVKDIAEEYRIKLLEAVAETDEEIMMKYLEGEEITVEELKAAIRKATINMQMTPVLCGSSYRNKGVQPLLDAVVDYLPSPVDIAAVKGFSPDTGEEIERKTSEDEPFCALAFKIMSDPYVGKLTFLRVYSGVLQAGSYVYNSTKNKKERVGRLLQMHANHREDIDAVYAGDICAAIGLSNTTTGDTLCDENHPIILESMEFPEPVIQVAIEPKTKADQEKMGIALQRLAEEDPTFKISTNHETGQTLIAGMGELHLEIIVDRMKREFKVEVNVGKPQVAYKETIKKSVKVEGKYIRQSGGRGQYGHVWLELEPLERGGGYEFVNKIVGGVIPKEFIPSVDAGVQEAMQSGVLAGYPVVDVRVTLFDGSYHEVDSSDMAFRIAAAQAFREGMKKAEPVLLEPIMKVEVVVPEEYMGDVMGDINARRGRIEGMELRGNAQVIRAYVPLAEMFGYATDLRSKTQGRGTYTMQFDHYEEVPKNIADKILEMKNK.

Residues 8-282 (EKTRNIGIMA…AVVDYLPSPV (275 aa)) enclose the tr-type G domain. GTP-binding positions include 17 to 24 (AHIDAGKT), 81 to 85 (DTPGH), and 135 to 138 (NKMD).

Belongs to the TRAFAC class translation factor GTPase superfamily. Classic translation factor GTPase family. EF-G/EF-2 subfamily.

It is found in the cytoplasm. In terms of biological role, catalyzes the GTP-dependent ribosomal translocation step during translation elongation. During this step, the ribosome changes from the pre-translocational (PRE) to the post-translocational (POST) state as the newly formed A-site-bound peptidyl-tRNA and P-site-bound deacylated tRNA move to the P and E sites, respectively. Catalyzes the coordinated movement of the two tRNA molecules, the mRNA and conformational changes in the ribosome. The sequence is that of Elongation factor G from Caldicellulosiruptor saccharolyticus (strain ATCC 43494 / DSM 8903 / Tp8T 6331).